Reading from the N-terminus, the 672-residue chain is Threonine--tRNA ligase (672 aa).

One can recognise a TGS domain in the interval serine 2 to aspartate 60. The interval aspartate 260–proline 567 is catalytic. Residues cysteine 366, histidine 417, and histidine 544 each contribute to the Zn(2+) site.

It belongs to the class-II aminoacyl-tRNA synthetase family. In terms of assembly, homodimer. It depends on Zn(2+) as a cofactor.

Its subcellular location is the cytoplasm. It carries out the reaction tRNA(Thr) + L-threonine + ATP = L-threonyl-tRNA(Thr) + AMP + diphosphate + H(+). Functionally, catalyzes the attachment of threonine to tRNA(Thr) in a two-step reaction: L-threonine is first activated by ATP to form Thr-AMP and then transferred to the acceptor end of tRNA(Thr). Also edits incorrectly charged L-seryl-tRNA(Thr). This chain is Threonine--tRNA ligase, found in Micrococcus luteus (strain ATCC 4698 / DSM 20030 / JCM 1464 / CCM 169 / CCUG 5858 / IAM 1056 / NBRC 3333 / NCIMB 9278 / NCTC 2665 / VKM Ac-2230) (Micrococcus lysodeikticus).